We begin with the raw amino-acid sequence, 94 residues long: Cystatin-A3 (94 aa).

A Secondary area of contact motif is present at residues 46–50 (QLVNG).

This sequence belongs to the cystatin family.

Its subcellular location is the cytoplasm. In terms of biological role, intracellular thiol proteinase inhibitor. The sequence is that of Cystatin-A3 (cpiC) from Dictyostelium discoideum (Social amoeba).